We begin with the raw amino-acid sequence, 160 residues long: Ureidoglycolate lyase (160 aa).

This sequence belongs to the ureidoglycolate lyase family. As to quaternary structure, homodimer. It depends on Ni(2+) as a cofactor.

It catalyses the reaction (S)-ureidoglycolate = urea + glyoxylate. Its pathway is nitrogen metabolism; (S)-allantoin degradation. Catalyzes the catabolism of the allantoin degradation intermediate (S)-ureidoglycolate, generating urea and glyoxylate. Involved in the anaerobic utilization of allantoin as sole nitrogen source. Reinforces the induction of genes involved in the degradation of allantoin and glyoxylate by producing glyoxylate. The sequence is that of Ureidoglycolate lyase from Escherichia coli O127:H6 (strain E2348/69 / EPEC).